Consider the following 327-residue polypeptide: Methionyl-tRNA formyltransferase (327 aa).

118-121 (SLLP) is a (6S)-5,6,7,8-tetrahydrofolate binding site.

The protein belongs to the Fmt family.

It carries out the reaction L-methionyl-tRNA(fMet) + (6R)-10-formyltetrahydrofolate = N-formyl-L-methionyl-tRNA(fMet) + (6S)-5,6,7,8-tetrahydrofolate + H(+). Functionally, attaches a formyl group to the free amino group of methionyl-tRNA(fMet). The formyl group appears to play a dual role in the initiator identity of N-formylmethionyl-tRNA by promoting its recognition by IF2 and preventing the misappropriation of this tRNA by the elongation apparatus. The protein is Methionyl-tRNA formyltransferase of Corynebacterium jeikeium (strain K411).